Here is a 189-residue protein sequence, read N- to C-terminus: Ribonuclease M5 (189 aa).

Residues 8–91 (KEIIVVEGKD…AFLPKEEALA (84 aa)) enclose the Toprim domain. 3 residues coordinate Mg(2+): Glu-14, Asp-60, and Asp-62.

This sequence belongs to the ribonuclease M5 family. The cofactor is Mg(2+).

It is found in the cytoplasm. It catalyses the reaction Endonucleolytic cleavage of RNA, removing 21 and 42 nucleotides, respectively, from the 5'- and 3'-termini of a 5S-rRNA precursor.. In terms of biological role, required for correct processing of both the 5' and 3' ends of 5S rRNA precursor. Cleaves both sides of a double-stranded region yielding mature 5S rRNA in one step. In Bacillus cereus (strain ATCC 14579 / DSM 31 / CCUG 7414 / JCM 2152 / NBRC 15305 / NCIMB 9373 / NCTC 2599 / NRRL B-3711), this protein is Ribonuclease M5.